The chain runs to 348 residues: tRNA N6-adenosine threonylcarbamoyltransferase (348 aa).

Residues histidine 115 and histidine 119 each contribute to the Fe cation site. Substrate is bound by residues 137–141 (LASGG), aspartate 170, glycine 183, and asparagine 281. Aspartate 309 is a Fe cation binding site.

The protein belongs to the KAE1 / TsaD family. Fe(2+) is required as a cofactor.

The protein localises to the cytoplasm. The catalysed reaction is L-threonylcarbamoyladenylate + adenosine(37) in tRNA = N(6)-L-threonylcarbamoyladenosine(37) in tRNA + AMP + H(+). In terms of biological role, required for the formation of a threonylcarbamoyl group on adenosine at position 37 (t(6)A37) in tRNAs that read codons beginning with adenine. Is involved in the transfer of the threonylcarbamoyl moiety of threonylcarbamoyl-AMP (TC-AMP) to the N6 group of A37, together with TsaE and TsaB. TsaD likely plays a direct catalytic role in this reaction. In Methylobacterium sp. (strain 4-46), this protein is tRNA N6-adenosine threonylcarbamoyltransferase.